The chain runs to 133 residues: Small ribosomal subunit protein uS8 (133 aa).

Belongs to the universal ribosomal protein uS8 family. As to quaternary structure, part of the 30S ribosomal subunit. Contacts proteins S5 and S12.

Its function is as follows. One of the primary rRNA binding proteins, it binds directly to 16S rRNA central domain where it helps coordinate assembly of the platform of the 30S subunit. This is Small ribosomal subunit protein uS8 from Protochlamydia amoebophila (strain UWE25).